The sequence spans 491 residues: Probable glycogen synthase 2 (491 aa).

Residue lysine 15 participates in ADP-alpha-D-glucose binding.

This sequence belongs to the glycosyltransferase 1 family. Bacterial/plant glycogen synthase subfamily.

The catalysed reaction is [(1-&gt;4)-alpha-D-glucosyl](n) + ADP-alpha-D-glucose = [(1-&gt;4)-alpha-D-glucosyl](n+1) + ADP + H(+). The protein operates within glycan biosynthesis; glycogen biosynthesis. In terms of biological role, synthesizes alpha-1,4-glucan chains using ADP-glucose. This chain is Probable glycogen synthase 2 (glgA2), found in Synechocystis sp. (strain ATCC 27184 / PCC 6803 / Kazusa).